The chain runs to 147 residues: Protein SprT-like (147 aa).

The region spanning 5-142 (DYVNEVSLED…SFCRGHLKEI (138 aa)) is the SprT-like domain. Histidine 64 is a Zn(2+) binding site. Glutamate 65 is a catalytic residue. Residue histidine 68 participates in Zn(2+) binding.

Belongs to the SprT family. Zn(2+) is required as a cofactor.

It localises to the cytoplasm. The polypeptide is Protein SprT-like (Streptococcus uberis (strain ATCC BAA-854 / 0140J)).